The primary structure comprises 97 residues: YcgL domain-containing protein PputGB1_4120 (97 aa).

The YcgL domain maps to 3–87; that stretch reads RICSIYKSPR…AEDEYIEHLP (85 aa).

The sequence is that of YcgL domain-containing protein PputGB1_4120 from Pseudomonas putida (strain GB-1).